The chain runs to 156 residues: Small ribosomal subunit protein uS7 (156 aa).

Belongs to the universal ribosomal protein uS7 family. In terms of assembly, part of the 30S ribosomal subunit. Contacts proteins S9 and S11.

Functionally, one of the primary rRNA binding proteins, it binds directly to 16S rRNA where it nucleates assembly of the head domain of the 30S subunit. Is located at the subunit interface close to the decoding center, probably blocks exit of the E-site tRNA. The sequence is that of Small ribosomal subunit protein uS7 from Paenarthrobacter aurescens (strain TC1).